Consider the following 217-residue polypeptide: 3-demethoxyubiquinol 3-hydroxylase (217 aa).

Fe cation is bound by residues Glu-66, Glu-96, His-99, Glu-148, Glu-180, and His-183.

This sequence belongs to the COQ7 family. It depends on Fe cation as a cofactor.

The protein localises to the cell membrane. It carries out the reaction a 5-methoxy-2-methyl-3-(all-trans-polyprenyl)benzene-1,4-diol + AH2 + O2 = a 3-demethylubiquinol + A + H2O. The protein operates within cofactor biosynthesis; ubiquinone biosynthesis. In terms of biological role, catalyzes the hydroxylation of 2-nonaprenyl-3-methyl-6-methoxy-1,4-benzoquinol during ubiquinone biosynthesis. In Ralstonia pickettii (strain 12J), this protein is 3-demethoxyubiquinol 3-hydroxylase.